The following is a 1279-amino-acid chain: ATP-dependent helicase/nuclease subunit A (1279 aa).

Residues 4 to 499 (TKWTDEQRQA…VKLFKNFRSR (496 aa)) form the UvrD-like helicase ATP-binding domain. 25–32 (AGAGAGKT) is a binding site for ATP. Residues 526-853 (EEALKVGASY…RIMSIHKSKG (328 aa)) enclose the UvrD-like helicase C-terminal domain.

It belongs to the helicase family. AddA subfamily. In terms of assembly, heterodimer of AddA and AddB/RexB. The cofactor is Mg(2+).

The enzyme catalyses Couples ATP hydrolysis with the unwinding of duplex DNA by translocating in the 3'-5' direction.. It catalyses the reaction ATP + H2O = ADP + phosphate + H(+). Functionally, the heterodimer acts as both an ATP-dependent DNA helicase and an ATP-dependent, dual-direction single-stranded exonuclease. Recognizes the chi site generating a DNA molecule suitable for the initiation of homologous recombination. The AddA nuclease domain is required for chi fragment generation; this subunit has the helicase and 3' -&gt; 5' nuclease activities. The sequence is that of ATP-dependent helicase/nuclease subunit A from Clostridium botulinum (strain Hall / ATCC 3502 / NCTC 13319 / Type A).